A 349-amino-acid chain; its full sequence is Core protein VP7 (349 aa).

N-linked (GlcNAc...) asparagine; by host glycosylation occurs at Asn-287.

It belongs to the orbivirus VP7 family. As to quaternary structure, homotrimer that assemble in a complex of 260 capsomers on an inner scaffold composed of VP3.

It localises to the virion. The VP7 protein is one of the five proteins (with VP1, VP3, VP4, and VP6) which form the inner capsid of the virus. In Antilocapra americana (Pronghorn), this protein is Core protein VP7 (Segment-7).